Consider the following 196-residue polypeptide: Probable molybdenum cofactor guanylyltransferase (196 aa).

GTP is bound by residues 7 to 9 (LAG), Lys19, Asp68, and Asp93. Mg(2+) is bound at residue Asp93.

This sequence belongs to the MobA family. It depends on Mg(2+) as a cofactor.

The protein resides in the cytoplasm. The catalysed reaction is Mo-molybdopterin + GTP + H(+) = Mo-molybdopterin guanine dinucleotide + diphosphate. Transfers a GMP moiety from GTP to Mo-molybdopterin (Mo-MPT) cofactor (Moco or molybdenum cofactor) to form Mo-molybdopterin guanine dinucleotide (Mo-MGD) cofactor. The polypeptide is Probable molybdenum cofactor guanylyltransferase (Pyrococcus furiosus (strain ATCC 43587 / DSM 3638 / JCM 8422 / Vc1)).